A 561-amino-acid chain; its full sequence is MNINVADLLNGNYILLLFVVLALGLCLGKLRLGSVQLGNSIGVLVVSLLLGQQHFSINTDALNLGFMLFIFCVGVEAGPNFFSIFFRDGKNYLMLALVMVGSALLIALGLGKLFGWDIGLTAGMLAGSMTSTPVLVGAGDTLRHSGIASTQLSSALDNLSLGYALTYLIGLVSLIVGARYLPKLQHQDLQTSAQQIARERGLDTDANRKVYLPVIRAYRVGPELVAWTDGKNLRELGIYRQTGCYIERIRRNGILANPDGDAVLQMGDEIALVGYPDAHARLDPSLRNGKEVFDRDLLDMRIVTEEIVVKNHNAVGRRLAQLKLTDHGCFLNRVIRSQIEMPIDDNVVLNKGDVLQVSGDARRVKTIADRIGFISIHSQVTDLLAFCAFFIIGLMIGMITFQFSNFSFGIGNAAGLLFAGIMLGFLRANHPTFGYIPQGALNMVKEFGLMVFMAGVGLSAGSGISNGLGAVGGQMLIAGLVVSLVPVVICFLFGAYVLRMNRALLFGAMMGARTCAPAMEIISDTARSNIPALGYAGTYAIANVLLTLAGTLIVIIWPGLG.

A run of 5 helical transmembrane segments spans residues 8 to 28, 32 to 52, 66 to 86, 94 to 114, and 158 to 178; these read LLNGNYILLLFVVLALGLCLG, LGSVQLGNSIGVLVVSLLLGQ, FMLFIFCVGVEAGPNFFSIFF, MLALVMVGSALLIALGLGKLF, and NLSLGYALTYLIGLVSLIVGA. 2 consecutive RCK C-terminal domains span residues 200–288 and 292–373; these read RGLD…SLRN and VFDR…RIGF. 5 helical membrane passes run 383–403, 406–426, 447–467, 475–495, and 540–560; these read LLAFCAFFIIGLMIGMITFQF, FSFGIGNAAGLLFAGIMLGFL, FGLMVFMAGVGLSAGSGISNG, MLIAGLVVSLVPVVICFLFGA, and AIANVLLTLAGTLIVIIWPGL.

Belongs to the AAE transporter (TC 2.A.81) family. YbjL subfamily.

It localises to the cell membrane. In Salmonella gallinarum (strain 287/91 / NCTC 13346), this protein is Putative transport protein YbjL.